We begin with the raw amino-acid sequence, 789 residues long: Probable phosphoketolase (789 aa).

It belongs to the XFP family. It depends on thiamine diphosphate as a cofactor.

The chain is Probable phosphoketolase from Brucella abortus (strain 2308).